The sequence spans 113 residues: Gas vesicle protein I2 (113 aa).

The segment at Met1 to Thr93 is disordered. Positions Gln11–Gln22 are enriched in low complexity. Over residues Glu52 to Ala63 the composition is skewed to polar residues. The segment covering Ala69 to Ala81 has biased composition (low complexity). Residues His82–Thr93 show a composition bias toward polar residues.

This sequence belongs to the gas vesicle GvpI family. As to quaternary structure, gvpF to GvpM interact with each other in vitro, and may form multi-subunit complex(es). Interacts with GvpC and GvpO.

It is found in the gas vesicle. Functionally, proteins GvpF to GvpM might be involved in nucleating gas vesicle formation. A minor component of the gas vesicle. Gas vesicles are hollow, gas filled proteinaceous nanostructures found in several microbial planktonic microorganisms. They allow positioning of halobacteria at the optimal depth for growth in the poorly aerated, shallow brine pools of their habitat. Its function is as follows. Expression of 2 c-vac DNA fragments containing 2 divergently transcribed regions (gvpE-gvpF-gvpG-gvpH-gvpI-gvpJ-gvpK-gvpL-gvpM and gvpA-gvpC-gvpN-gvpO) allows H.volcanii to produce gas vesicles. The protein is Gas vesicle protein I2 of Halobacterium salinarum (strain ATCC 700922 / JCM 11081 / NRC-1) (Halobacterium halobium).